The primary structure comprises 119 residues: Large ribosomal subunit protein uL18 (119 aa).

It belongs to the universal ribosomal protein uL18 family. In terms of assembly, part of the 50S ribosomal subunit; part of the 5S rRNA/L5/L18/L25 subcomplex. Contacts the 5S and 23S rRNAs.

Functionally, this is one of the proteins that bind and probably mediate the attachment of the 5S RNA into the large ribosomal subunit, where it forms part of the central protuberance. The protein is Large ribosomal subunit protein uL18 of Lactobacillus johnsonii (strain CNCM I-12250 / La1 / NCC 533).